A 155-amino-acid chain; its full sequence is Molybdopterin synthase catalytic subunit (155 aa).

Substrate contacts are provided by residues 109 to 110 (HR), Lys-125, and 132 to 134 (KKE).

The protein belongs to the MoaE family. MOCS2B subfamily. As to quaternary structure, heterotetramer; composed of 2 small (MOCS2A) and 2 large (MOCS2B) subunits.

The protein resides in the cytoplasm. Its subcellular location is the cytosol. It carries out the reaction 2 [molybdopterin-synthase sulfur-carrier protein]-C-terminal-Gly-aminoethanethioate + cyclic pyranopterin phosphate + H2O = molybdopterin + 2 [molybdopterin-synthase sulfur-carrier protein]-C-terminal Gly-Gly + 2 H(+). Its pathway is cofactor biosynthesis; molybdopterin biosynthesis. In terms of biological role, catalytic subunit of the molybdopterin synthase complex, a complex that catalyzes the conversion of precursor Z into molybdopterin. Acts by mediating the incorporation of 2 sulfur atoms from thiocarboxylated MOCS2A into precursor Z to generate a dithiolene group. The chain is Molybdopterin synthase catalytic subunit from Taeniopygia guttata (Zebra finch).